Consider the following 358-residue polypeptide: Type II restriction enzyme CviJI (358 aa).

Mg(2+) is required as a cofactor.

The catalysed reaction is Endonucleolytic cleavage of DNA to give specific double-stranded fragments with terminal 5'-phosphates.. Functionally, a P subtype restriction enzyme that recognizes the double-stranded sequence 5'-RGCY-3' and cleaves after G-2. In the presence of ATP, there is a relaxation of its specificity and it can cleave 5'-RGCN-3' and 5'-YGCY-3', but not 5'-YGCR-3' (R.CviJI* activity). The sequence is that of Type II restriction enzyme CviJI from Paramecium bursaria Chlorella virus IL3A (PBCV-IL3A).